A 426-amino-acid polypeptide reads, in one-letter code: Serine--tRNA ligase (426 aa).

Thr229–Glu231 is an L-serine binding site. Arg260–Glu262 lines the ATP pocket. Glu283 lines the L-serine pocket. Glu347 to Ser350 is an ATP binding site. Position 383 (Ser383) interacts with L-serine.

The protein belongs to the class-II aminoacyl-tRNA synthetase family. Type-1 seryl-tRNA synthetase subfamily. As to quaternary structure, homodimer. The tRNA molecule binds across the dimer.

The protein localises to the cytoplasm. It carries out the reaction tRNA(Ser) + L-serine + ATP = L-seryl-tRNA(Ser) + AMP + diphosphate + H(+). The catalysed reaction is tRNA(Sec) + L-serine + ATP = L-seryl-tRNA(Sec) + AMP + diphosphate + H(+). It participates in aminoacyl-tRNA biosynthesis; selenocysteinyl-tRNA(Sec) biosynthesis; L-seryl-tRNA(Sec) from L-serine and tRNA(Sec): step 1/1. Catalyzes the attachment of serine to tRNA(Ser). Is also able to aminoacylate tRNA(Sec) with serine, to form the misacylated tRNA L-seryl-tRNA(Sec), which will be further converted into selenocysteinyl-tRNA(Sec). This chain is Serine--tRNA ligase, found in Rickettsia bellii (strain OSU 85-389).